Here is a 135-residue protein sequence, read N- to C-terminus: Congerin-1 (135 aa).

At serine 1 the chain carries N-acetylserine. The Galectin domain maps to 3–135 (GLQVKNFDFT…GDARLTLVKE (133 aa)). Residue 70–76 (WETEQRS) participates in a beta-D-galactoside binding.

As to quaternary structure, homodimer.

Its function is as follows. This protein binds beta-galactoside. Its physiological function is not yet known. This is Congerin-1 from Conger myriaster (Conger eel).